A 652-amino-acid chain; its full sequence is tRNA 5-methylaminomethyl-2-thiouridine biosynthesis bifunctional protein MnmC (652 aa).

The tRNA (mnm(5)s(2)U34)-methyltransferase stretch occupies residues 1-235 (MPDRLVPATL…EPALRVGEYA (235 aa)). The segment at 259–652 (IGAGLAGCAV…IRALRGRQIG (394 aa)) is FAD-dependent cmnm(5)s(2)U34 oxidoreductase.

It in the N-terminal section; belongs to the methyltransferase superfamily. tRNA (mnm(5)s(2)U34)-methyltransferase family. In the C-terminal section; belongs to the DAO family. Requires FAD as cofactor.

It is found in the cytoplasm. It carries out the reaction 5-aminomethyl-2-thiouridine(34) in tRNA + S-adenosyl-L-methionine = 5-methylaminomethyl-2-thiouridine(34) in tRNA + S-adenosyl-L-homocysteine + H(+). Its function is as follows. Catalyzes the last two steps in the biosynthesis of 5-methylaminomethyl-2-thiouridine (mnm(5)s(2)U) at the wobble position (U34) in tRNA. Catalyzes the FAD-dependent demodification of cmnm(5)s(2)U34 to nm(5)s(2)U34, followed by the transfer of a methyl group from S-adenosyl-L-methionine to nm(5)s(2)U34, to form mnm(5)s(2)U34. The chain is tRNA 5-methylaminomethyl-2-thiouridine biosynthesis bifunctional protein MnmC from Burkholderia ambifaria (strain ATCC BAA-244 / DSM 16087 / CCUG 44356 / LMG 19182 / AMMD) (Burkholderia cepacia (strain AMMD)).